A 240-amino-acid polypeptide reads, in one-letter code: Transcriptional regulatory protein ResD (240 aa).

The Response regulatory domain maps to 8-121; that stretch reads KILVVDDEAR…EVVLRVKALL (114 aa). The residue at position 57 (aspartate 57) is a 4-aspartylphosphate. Positions 137-237 form a DNA-binding region, ompR/PhoB-type; the sequence is KNVLVFSHLS…VWGVGYKFEV (101 aa).

As to quaternary structure, interacts with the RNA polymerase core. Post-translationally, phosphorylated by ResE.

It localises to the cytoplasm. Its function is as follows. Member of the two-component regulatory system ResD/ResE. Required for the expression of resA, ctaA, qcrABC and fnr; activation role in global regulation of aerobic and anaerobic respiration. The chain is Transcriptional regulatory protein ResD (resD) from Bacillus subtilis (strain 168).